A 538-amino-acid polypeptide reads, in one-letter code: MPEIGVRNGAFGADKFGLQNLKAVYWNPGAPQLYEHALRSGEAMVNADGALCAETGIFTGRSPKDKFTVRDAATDKSVWWAGNQSMTPDQFAALYSDFLAHARNMTLFAQDLYGGADPNFRIKTRVFTELAWHSLFIRTLLRRPETSELAAFVPELTVIDLPSFRADPQRHGVRSENVVAIDFTRRIILIGGSHYAGEMKKSIFTTLNYYLPDQDVLPMHCSANVGPGGDSAIFFGLSGTGKTTLSADPGRTLIGDDEHGWSKDGIFNFEGGCYAKCIRLSREAEPEIYAASKRFGAVLENVVHDEVTRVPDFNDGSKTENTRSAYPLEFIPNASLTGCAGQPKNLVMLAADAFGVLPPIARLTPAQAMYHFLSGYTAKVAGTERDLGNEPQPEFSACFGSPFLPRHPGVYGNMLRALIAKHNVDCWLVNTGWTGGKYGTGRRMPIKVTRALLGAALDGSLRGVPFHDDRYFGFAVPTSVPGVEPHILDPIRTWADKIEFDRTARALIGMFRQNFTKFENDVDAEVREAAPGTMMAAE.

Substrate-binding residues include Arg-61, Tyr-195, and Lys-201. ATP is bound by residues Lys-201, His-220, and 236-244; that span reads GLSGTGKTT. Lys-201 and His-220 together coordinate Mn(2+). Residue Asp-257 participates in Mn(2+) binding. Residues Glu-285, Arg-323, and Thr-449 each contribute to the ATP site. A substrate-binding site is contributed by Arg-323.

This sequence belongs to the phosphoenolpyruvate carboxykinase (ATP) family. Mn(2+) is required as a cofactor.

The protein localises to the cytoplasm. It carries out the reaction oxaloacetate + ATP = phosphoenolpyruvate + ADP + CO2. It functions in the pathway carbohydrate biosynthesis; gluconeogenesis. Functionally, involved in the gluconeogenesis. Catalyzes the conversion of oxaloacetate (OAA) to phosphoenolpyruvate (PEP) through direct phosphoryl transfer between the nucleoside triphosphate and OAA. This Nitrobacter winogradskyi (strain ATCC 25391 / DSM 10237 / CIP 104748 / NCIMB 11846 / Nb-255) protein is Phosphoenolpyruvate carboxykinase (ATP).